The chain runs to 125 residues: Glycine cleavage system H protein (125 aa).

The Lipoyl-binding domain occupies 19 to 101 (VGTVGISDYA…EGAAWFFKLT (83 aa)). At Lys60 the chain carries N6-lipoyllysine.

Belongs to the GcvH family. As to quaternary structure, the glycine cleavage system is composed of four proteins: P, T, L and H. (R)-lipoate serves as cofactor.

The glycine cleavage system catalyzes the degradation of glycine. The H protein shuttles the methylamine group of glycine from the P protein to the T protein. In Paramagnetospirillum magneticum (strain ATCC 700264 / AMB-1) (Magnetospirillum magneticum), this protein is Glycine cleavage system H protein.